The sequence spans 831 residues: Zinc phosphodiesterase ELAC protein 2 (831 aa).

A mitochondrion-targeting transit peptide spans 1 to 16 (MWALRSLLRPLGLRTM). Disordered stretches follow at residues 15–47 (TMSQGSARRPRPSKDPLRHLRTREKRGPGPGGP) and 179–227 (SERR…ANRK). Over residues 186-212 (QQPSQSPRTSPNRLSPKQSSDSGSAEN) the composition is skewed to polar residues. Phosphoserine is present on residues Ser191, Ser195, Ser200, Ser204, and Ser732. The disordered stretch occupies residues 791–831 (LTQQADSPEDREPQQKRAHTDEPHSPQSKKESVANTLGARV). Thr792 bears the Phosphothreonine mark. 2 positions are modified to phosphoserine: Ser797 and Ser815. Residues 798–822 (PEDREPQQKRAHTDEPHSPQSKKES) show a composition bias toward basic and acidic residues.

It belongs to the RNase Z family. As to quaternary structure, homodimer. Interacts with PTCD1. It depends on Zn(2+) as a cofactor.

The protein resides in the mitochondrion. It localises to the mitochondrion matrix. The protein localises to the mitochondrion nucleoid. Its subcellular location is the nucleus. It carries out the reaction Endonucleolytic cleavage of RNA, removing extra 3' nucleotides from tRNA precursor, generating 3' termini of tRNAs. A 3'-hydroxy group is left at the tRNA terminus and a 5'-phosphoryl group is left at the trailer molecule.. In terms of biological role, zinc phosphodiesterase, which displays mitochondrial tRNA 3'-processing endonuclease activity. Involved in tRNA maturation, by removing a 3'-trailer from precursor tRNA. Associates with mitochondrial DNA complexes at the nucleoids to initiate RNA processing and ribosome assembly. This chain is Zinc phosphodiesterase ELAC protein 2 (Elac2), found in Mus musculus (Mouse).